Consider the following 233-residue polypeptide: Ribonuclease 3 (233 aa).

The RNase III domain occupies 8–135 (AQRFLEDKQL…VIGAIYLDQG (128 aa)). Residue Glu48 coordinates Mg(2+). Asp52 is an active-site residue. Asp121 and Glu124 together coordinate Mg(2+). Residue Glu124 is part of the active site. In terms of domain architecture, DRBM spans 161–230 (DYKSKLQELV…AQKVLQDNLV (70 aa)).

It belongs to the ribonuclease III family. In terms of assembly, homodimer. Requires Mg(2+) as cofactor.

The protein localises to the cytoplasm. It catalyses the reaction Endonucleolytic cleavage to 5'-phosphomonoester.. Functionally, digests double-stranded RNA. Involved in the processing of primary rRNA transcript to yield the immediate precursors to the large and small rRNAs (23S and 16S). Processes some mRNAs, and tRNAs when they are encoded in the rRNA operon. Processes pre-crRNA and tracrRNA of type II CRISPR loci if present in the organism. This is Ribonuclease 3 from Syntrophomonas wolfei subsp. wolfei (strain DSM 2245B / Goettingen).